The chain runs to 496 residues: Fatty acyl-CoA reductase 8 (496 aa).

Belongs to the fatty acyl-CoA reductase family.

It catalyses the reaction a long-chain fatty acyl-CoA + 2 NADPH + 2 H(+) = a long-chain primary fatty alcohol + 2 NADP(+) + CoA. Its function is as follows. Catalyzes the reduction of fatty acyl-CoA to fatty alcohols. Catalyzes specifically the formation of C16:0 fatty alcohol. The polypeptide is Fatty acyl-CoA reductase 8 (FAR8) (Arabidopsis thaliana (Mouse-ear cress)).